We begin with the raw amino-acid sequence, 337 residues long: Glyceraldehyde-3-phosphate dehydrogenase 1 (337 aa).

NAD(+)-binding positions include 12 to 13, D34, and M79; that span reads RI. D-glyceraldehyde 3-phosphate is bound by residues 151–153, T182, 211–212, and R234; these read SCT and TG. The active-site Nucleophile is the C152. N316 lines the NAD(+) pocket.

It belongs to the glyceraldehyde-3-phosphate dehydrogenase family. Homotetramer.

It localises to the cytoplasm. It carries out the reaction D-glyceraldehyde 3-phosphate + phosphate + NAD(+) = (2R)-3-phospho-glyceroyl phosphate + NADH + H(+). It participates in carbohydrate degradation; glycolysis; pyruvate from D-glyceraldehyde 3-phosphate: step 1/5. This is Glyceraldehyde-3-phosphate dehydrogenase 1 (GAP1) from Giardia intestinalis (Giardia lamblia).